Consider the following 88-residue polypeptide: DNA-directed RNA polymerase subunit omega (88 aa).

Belongs to the RNA polymerase subunit omega family. As to quaternary structure, the RNAP catalytic core consists of 2 alpha, 1 beta, 1 beta' and 1 omega subunit. When a sigma factor is associated with the core the holoenzyme is formed, which can initiate transcription.

The catalysed reaction is RNA(n) + a ribonucleoside 5'-triphosphate = RNA(n+1) + diphosphate. In terms of biological role, promotes RNA polymerase assembly. Latches the N- and C-terminal regions of the beta' subunit thereby facilitating its interaction with the beta and alpha subunits. The chain is DNA-directed RNA polymerase subunit omega from Haemophilus influenzae (strain PittEE).